We begin with the raw amino-acid sequence, 86 residues long: Large ribosomal subunit protein bL27 (86 aa).

It belongs to the bacterial ribosomal protein bL27 family.

The protein is Large ribosomal subunit protein bL27 of Christiangramia forsetii (strain DSM 17595 / CGMCC 1.15422 / KT0803) (Gramella forsetii).